A 317-amino-acid polypeptide reads, in one-letter code: Ferrochelatase (317 aa).

Fe cation contacts are provided by His-184 and Glu-259.

It belongs to the ferrochelatase family.

It localises to the cytoplasm. It carries out the reaction heme b + 2 H(+) = protoporphyrin IX + Fe(2+). The protein operates within porphyrin-containing compound metabolism; protoheme biosynthesis; protoheme from protoporphyrin-IX: step 1/1. In terms of biological role, catalyzes the ferrous insertion into protoporphyrin IX. The protein is Ferrochelatase of Chlamydia muridarum (strain MoPn / Nigg).